Here is a 262-residue protein sequence, read N- to C-terminus: Zinc-finger homeodomain protein 6 (262 aa).

Basic and acidic residues-rich tracts occupy residues 1–25 (MEVREKKDEKMEMTRRKSSALDHHR) and 36–47 (NKEKPTTKRNGS). The tract at residues 1–93 (MEVREKKDEK…ECQKNHAASS (93 aa)) is disordered. The ZF-HD dimerization-type; degenerate zinc-finger motif lies at 82-131 (YRECQKNHAASSGGHVVDGCGEFMSSGEEGTVESLLCAACDCHRSFHRKE). A DNA-binding region (homeobox) is located at residues 198-261 (KKRFRTKFNE…NNKQAAKKKD (64 aa)).

Homo- and heterodimer with other ZFHD proteins. Interacts with MIF1 and MIF3; these interactions prevent nuclear localization and DNA-binding to inhibit transcription regulation activity. Binds to ZHD1, ZHD2, ZHD10 and ZHD11. As to expression, expressed in seedlings, roots, leaves, stems, flowers and inflorescence.

The protein resides in the nucleus. Putative transcription factor. The sequence is that of Zinc-finger homeodomain protein 6 (ZHD6) from Arabidopsis thaliana (Mouse-ear cress).